The sequence spans 137 residues: Large ribosomal subunit protein uL16 (137 aa).

The protein belongs to the universal ribosomal protein uL16 family. In terms of assembly, part of the 50S ribosomal subunit.

Its function is as follows. Binds 23S rRNA and is also seen to make contacts with the A and possibly P site tRNAs. In Leuconostoc mesenteroides subsp. mesenteroides (strain ATCC 8293 / DSM 20343 / BCRC 11652 / CCM 1803 / JCM 6124 / NCDO 523 / NBRC 100496 / NCIMB 8023 / NCTC 12954 / NRRL B-1118 / 37Y), this protein is Large ribosomal subunit protein uL16.